The chain runs to 477 residues: Monocarboxylate transporter 12-B (477 aa).

Residues 1 to 9 are Cytoplasmic-facing; that stretch reads MAQEKKKGG. The next 12 membrane-spanning stretches (helical) occupy residues 10 to 30, 58 to 78, 86 to 106, 116 to 136, 148 to 168, 178 to 198, 253 to 273, 289 to 309, 320 to 340, 344 to 364, 383 to 403, and 413 to 433; these read VLPP…VVTV, AWIH…GSLI, IAVI…SFAT, GLLT…MVGI, IAMS…QLLI, LILG…RPII, FLVL…PFVY, AFLM…FGWL, NICY…IPLL, VWLV…VALI, VVYF…GWLV, and FFLS…VAII. Over 434–477 the chain is Cytoplasmic; it reads RYCQRNQKKNSLSKIPKLVSCEGKQVDYYPPKNKDLMLIIPATS.

It belongs to the major facilitator superfamily. Monocarboxylate porter (TC 2.A.1.13) family.

The protein localises to the cell membrane. Its subcellular location is the basolateral cell membrane. The catalysed reaction is creatine(in) = creatine(out). It carries out the reaction guanidinoacetate(in) = guanidinoacetate(out). In terms of biological role, functions as a transporter for creatine and as well for its precursor guanidinoacetate. Transport of creatine and GAA is independent of resting membrane potential and extracellular Na(+), Cl(-), or pH. Contributes to the process of creatine biosynthesis and distribution. This chain is Monocarboxylate transporter 12-B (slc16a12b), found in Danio rerio (Zebrafish).